A 181-amino-acid polypeptide reads, in one-letter code: MELLKVIKSQDKITLKTEKVNKNVFFYFKNKKKILLKITFSGELFLKERTLITLNNLNYSNYSNYIKFMAKNLETFFYDQYNYFSKLHMIGLGFKNFILRKHLYILVGDCNYIIFRIPDSLKIFCKKNQVFILGESNVEIFNFMSNIKRVKKSNFYKGKGVLQFKNFKFTKLKVGKKQRFM.

The protein belongs to the universal ribosomal protein uL6 family.

The protein localises to the mitochondrion. The sequence is that of Large ribosomal subunit protein uL6m (RPL6) from Acanthamoeba castellanii (Amoeba).